A 475-amino-acid chain; its full sequence is Aspartyl/glutamyl-tRNA(Asn/Gln) amidotransferase subunit B (475 aa).

This sequence belongs to the GatB/GatE family. GatB subfamily. In terms of assembly, heterotrimer of A, B and C subunits.

The catalysed reaction is L-glutamyl-tRNA(Gln) + L-glutamine + ATP + H2O = L-glutaminyl-tRNA(Gln) + L-glutamate + ADP + phosphate + H(+). It catalyses the reaction L-aspartyl-tRNA(Asn) + L-glutamine + ATP + H2O = L-asparaginyl-tRNA(Asn) + L-glutamate + ADP + phosphate + 2 H(+). In terms of biological role, allows the formation of correctly charged Asn-tRNA(Asn) or Gln-tRNA(Gln) through the transamidation of misacylated Asp-tRNA(Asn) or Glu-tRNA(Gln) in organisms which lack either or both of asparaginyl-tRNA or glutaminyl-tRNA synthetases. The reaction takes place in the presence of glutamine and ATP through an activated phospho-Asp-tRNA(Asn) or phospho-Glu-tRNA(Gln). The protein is Aspartyl/glutamyl-tRNA(Asn/Gln) amidotransferase subunit B of Helicobacter pylori (strain HPAG1).